We begin with the raw amino-acid sequence, 325 residues long: Ribonucleoside-diphosphate reductase small chain (325 aa).

Residues Asp76, Glu107, and His110 each coordinate Fe cation. The active site involves Tyr114. Positions 170, 204, and 207 each coordinate Fe cation.

Belongs to the ribonucleoside diphosphate reductase small chain family. Heterodimer of a large and a small subunit. Fe cation serves as cofactor.

The enzyme catalyses a 2'-deoxyribonucleoside 5'-diphosphate + [thioredoxin]-disulfide + H2O = a ribonucleoside 5'-diphosphate + [thioredoxin]-dithiol. Provides the precursors necessary for DNA synthesis. Catalyzes the biosynthesis of deoxyribonucleotides from the corresponding ribonucleotides. In Encephalitozoon cuniculi (strain GB-M1) (Microsporidian parasite), this protein is Ribonucleoside-diphosphate reductase small chain.